Here is a 117-residue protein sequence, read N- to C-terminus: Hydrogenase maturation factor HypA (117 aa).

His-2 contacts Ni(2+). 4 residues coordinate Zn(2+): Cys-73, Cys-76, Cys-89, and Cys-92.

This sequence belongs to the HypA/HybF family.

Involved in the maturation of [NiFe] hydrogenases. Required for nickel insertion into the metal center of the hydrogenase. This Chlorobium luteolum (strain DSM 273 / BCRC 81028 / 2530) (Pelodictyon luteolum) protein is Hydrogenase maturation factor HypA.